Reading from the N-terminus, the 273-residue chain is Urease accessory protein UreD (273 aa).

This sequence belongs to the UreD family. In terms of assembly, ureD, UreF and UreG form a complex that acts as a GTP-hydrolysis-dependent molecular chaperone, activating the urease apoprotein by helping to assemble the nickel containing metallocenter of UreC. The UreE protein probably delivers the nickel.

Its subcellular location is the cytoplasm. Required for maturation of urease via the functional incorporation of the urease nickel metallocenter. In Rhizobium rhizogenes (strain K84 / ATCC BAA-868) (Agrobacterium radiobacter), this protein is Urease accessory protein UreD.